We begin with the raw amino-acid sequence, 232 residues long: Enolase-phosphatase E1 (232 aa).

Belongs to the HAD-like hydrolase superfamily. MasA/MtnC family. As to quaternary structure, monomer. Mg(2+) is required as a cofactor.

It carries out the reaction 5-methylsulfanyl-2,3-dioxopentyl phosphate + H2O = 1,2-dihydroxy-5-(methylsulfanyl)pent-1-en-3-one + phosphate. It functions in the pathway amino-acid biosynthesis; L-methionine biosynthesis via salvage pathway; L-methionine from S-methyl-5-thio-alpha-D-ribose 1-phosphate: step 3/6. It participates in amino-acid biosynthesis; L-methionine biosynthesis via salvage pathway; L-methionine from S-methyl-5-thio-alpha-D-ribose 1-phosphate: step 4/6. In terms of biological role, bifunctional enzyme that catalyzes the enolization of 2,3-diketo-5-methylthiopentyl-1-phosphate (DK-MTP-1-P) into the intermediate 2-hydroxy-3-keto-5-methylthiopentenyl-1-phosphate (HK-MTPenyl-1-P), which is then dephosphorylated to form the acireductone 1,2-dihydroxy-3-keto-5-methylthiopentene (DHK-MTPene). The protein is Enolase-phosphatase E1 of Xylella fastidiosa (strain 9a5c).